The following is a 123-amino-acid chain: Small ribosomal subunit protein uS12 (123 aa).

The residue at position 89 (Asp-89) is a 3-methylthioaspartic acid.

It belongs to the universal ribosomal protein uS12 family. In terms of assembly, part of the 30S ribosomal subunit. Contacts proteins S8 and S17. May interact with IF1 in the 30S initiation complex.

Its function is as follows. With S4 and S5 plays an important role in translational accuracy. Functionally, interacts with and stabilizes bases of the 16S rRNA that are involved in tRNA selection in the A site and with the mRNA backbone. Located at the interface of the 30S and 50S subunits, it traverses the body of the 30S subunit contacting proteins on the other side and probably holding the rRNA structure together. The combined cluster of proteins S8, S12 and S17 appears to hold together the shoulder and platform of the 30S subunit. This chain is Small ribosomal subunit protein uS12, found in Bifidobacterium animalis subsp. lactis (strain AD011).